Reading from the N-terminus, the 1112-residue chain is Mediator of RNA polymerase II transcription subunit 14 (1112 aa).

The protein belongs to the Mediator complex subunit 14 family. In terms of assembly, component of the Mediator complex.

It is found in the nucleus. In terms of biological role, component of the Mediator complex, a coactivator involved in the regulated transcription of nearly all RNA polymerase II-dependent genes. Mediator functions as a bridge to convey information from gene-specific regulatory proteins to the basal RNA polymerase II transcription machinery. Mediator is recruited to promoters by direct interactions with regulatory proteins and serves as a scaffold for the assembly of a functional preinitiation complex with RNA polymerase II and the general transcription factors. This chain is Mediator of RNA polymerase II transcription subunit 14 (RGR1), found in Scheffersomyces stipitis (strain ATCC 58785 / CBS 6054 / NBRC 10063 / NRRL Y-11545) (Yeast).